Reading from the N-terminus, the 514-residue chain is Probable lipid II flippase MurJ (514 aa).

The next 14 membrane-spanning stretches (helical) occupy residues 3–23 (ILKS…FGFF), 25–45 (DVLI…FIAF), 92–112 (ILVL…IIFI), 130–150 (LLKI…CSSI), 157–177 (FFIP…FSFF), 186–206 (IISL…YQFP), 245–265 (ISLI…ISWI), 271–291 (LIEF…FTSF), 315–335 (LILS…LVII), 354–374 (LELY…VSAF), 386–406 (ISIL…FYFQ), 409–429 (GLAL…YWKL), 448–468 (LLIA…FIPS), and 481–501 (LFTI…FLGI).

It belongs to the MurJ/MviN family.

It is found in the cell inner membrane. It participates in cell wall biogenesis; peptidoglycan biosynthesis. Functionally, involved in peptidoglycan biosynthesis. Transports lipid-linked peptidoglycan precursors from the inner to the outer leaflet of the cytoplasmic membrane. This Buchnera aphidicola subsp. Schizaphis graminum (strain Sg) protein is Probable lipid II flippase MurJ.